Here is a 206-residue protein sequence, read N- to C-terminus: Purine nucleoside phosphorylase aq_167 (206 aa).

Residues His42, Cys78, and His93 each coordinate Zn(2+).

The protein belongs to the purine nucleoside phosphorylase YfiH/LACC1 family. Homodimer. It depends on Cu(2+) as a cofactor. The cofactor is Zn(2+).

It catalyses the reaction adenosine + phosphate = alpha-D-ribose 1-phosphate + adenine. The catalysed reaction is S-methyl-5'-thioadenosine + phosphate = 5-(methylsulfanyl)-alpha-D-ribose 1-phosphate + adenine. It carries out the reaction inosine + phosphate = alpha-D-ribose 1-phosphate + hypoxanthine. The enzyme catalyses adenosine + H2O + H(+) = inosine + NH4(+). Functionally, purine nucleoside enzyme that catalyzes the phosphorolysis of adenosine and inosine nucleosides, yielding D-ribose 1-phosphate and the respective free bases, adenine and hypoxanthine. Also catalyzes the phosphorolysis of S-methyl-5'-thioadenosine into adenine and S-methyl-5-thio-alpha-D-ribose 1-phosphate. Also has adenosine deaminase activity. The polypeptide is Purine nucleoside phosphorylase aq_167 (Aquifex aeolicus (strain VF5)).